The sequence spans 162 residues: 2-C-methyl-D-erythritol 2,4-cyclodiphosphate synthase (162 aa).

A divalent metal cation is bound by residues Asp8 and His10. 4-CDP-2-C-methyl-D-erythritol 2-phosphate-binding positions include 8–10 (DVH) and 36–37 (HS). Position 44 (His44) interacts with a divalent metal cation. 4-CDP-2-C-methyl-D-erythritol 2-phosphate-binding positions include 58 to 60 (DIG), 63 to 67 (FPDTD), 102 to 108 (AQAPKMA), 134 to 137 (TTTE), Phe141, and Arg144.

Belongs to the IspF family. Homotrimer. It depends on a divalent metal cation as a cofactor.

The enzyme catalyses 4-CDP-2-C-methyl-D-erythritol 2-phosphate = 2-C-methyl-D-erythritol 2,4-cyclic diphosphate + CMP. It participates in isoprenoid biosynthesis; isopentenyl diphosphate biosynthesis via DXP pathway; isopentenyl diphosphate from 1-deoxy-D-xylulose 5-phosphate: step 4/6. In terms of biological role, involved in the biosynthesis of isopentenyl diphosphate (IPP) and dimethylallyl diphosphate (DMAPP), two major building blocks of isoprenoid compounds. Catalyzes the conversion of 4-diphosphocytidyl-2-C-methyl-D-erythritol 2-phosphate (CDP-ME2P) to 2-C-methyl-D-erythritol 2,4-cyclodiphosphate (ME-CPP) with a corresponding release of cytidine 5-monophosphate (CMP). The chain is 2-C-methyl-D-erythritol 2,4-cyclodiphosphate synthase from Yersinia pseudotuberculosis serotype O:1b (strain IP 31758).